Consider the following 823-residue polypeptide: ATP-dependent RNA helicase HrpA (823 aa).

A Helicase ATP-binding domain is found at 16–179 (IKVLKNHNVL…FNNAPVVSIE (164 aa)). 29–36 (SPTGSGKT) provides a ligand contact to ATP. The DEAH box motif lies at 126 to 129 (DEAH). The Helicase C-terminal domain occupies 203–374 (KIKEIVLNVI…EVVLRMADIG (172 aa)).

This sequence belongs to the DEAD box helicase family. DEAH subfamily.

It catalyses the reaction ATP + H2O = ADP + phosphate + H(+). In terms of biological role, has RNA-stimulated ATPase activity and RNA helicase activity. Involved in global regulation of gene expression. Could be involved in RNA processing and post-transcriptional gene regulation. Essential for both tick transmission and mouse infection. The chain is ATP-dependent RNA helicase HrpA from Borreliella burgdorferi (strain ATCC 35210 / DSM 4680 / CIP 102532 / B31) (Borrelia burgdorferi).